Consider the following 337-residue polypeptide: tRNA N6-adenosine threonylcarbamoyltransferase (337 aa).

Residues His-107 and His-111 each coordinate Fe cation. Substrate contacts are provided by residues 129–133, Asp-162, Gly-175, and Asn-271; that span reads LISGG. Asp-299 is a binding site for Fe cation.

Belongs to the KAE1 / TsaD family. Fe(2+) is required as a cofactor.

Its subcellular location is the cytoplasm. The catalysed reaction is L-threonylcarbamoyladenylate + adenosine(37) in tRNA = N(6)-L-threonylcarbamoyladenosine(37) in tRNA + AMP + H(+). In terms of biological role, required for the formation of a threonylcarbamoyl group on adenosine at position 37 (t(6)A37) in tRNAs that read codons beginning with adenine. Is involved in the transfer of the threonylcarbamoyl moiety of threonylcarbamoyl-AMP (TC-AMP) to the N6 group of A37, together with TsaE and TsaB. TsaD likely plays a direct catalytic role in this reaction. In Sulfurovum sp. (strain NBC37-1), this protein is tRNA N6-adenosine threonylcarbamoyltransferase.